The primary structure comprises 354 residues: UPF0283 membrane protein plu2581 (354 aa).

Helical transmembrane passes span 71 to 91, 101 to 121, and 214 to 234; these read MVYGSLMLLGLSAVAQFVQWI, SALGVAAAGSMIVFAGIGSLV, and ESALMIAVSPLAIVDMAFIAW.

It belongs to the UPF0283 family.

Its subcellular location is the cell inner membrane. In Photorhabdus laumondii subsp. laumondii (strain DSM 15139 / CIP 105565 / TT01) (Photorhabdus luminescens subsp. laumondii), this protein is UPF0283 membrane protein plu2581.